A 314-amino-acid polypeptide reads, in one-letter code: Methionyl-tRNA formyltransferase (314 aa).

113–116 (SLLP) is a (6S)-5,6,7,8-tetrahydrofolate binding site.

It belongs to the Fmt family.

It carries out the reaction L-methionyl-tRNA(fMet) + (6R)-10-formyltetrahydrofolate = N-formyl-L-methionyl-tRNA(fMet) + (6S)-5,6,7,8-tetrahydrofolate + H(+). Attaches a formyl group to the free amino group of methionyl-tRNA(fMet). The formyl group appears to play a dual role in the initiator identity of N-formylmethionyl-tRNA by promoting its recognition by IF2 and preventing the misappropriation of this tRNA by the elongation apparatus. This is Methionyl-tRNA formyltransferase from Pseudomonas aeruginosa (strain ATCC 15692 / DSM 22644 / CIP 104116 / JCM 14847 / LMG 12228 / 1C / PRS 101 / PAO1).